We begin with the raw amino-acid sequence, 739 residues long: Xylosyl- and glucuronyltransferase LARGE2s (739 aa).

Residues 1 to 10 (MLCSWRVKLK) lie on the Cytoplasmic side of the membrane. Residues 11 to 31 (LLLATITLAVLLSWLYLFVGS) traverse the membrane as a helical; Signal-anchor for type II membrane protein segment. At 32-739 (LEYGRFLLLP…LKYLTAERNL (708 aa)) the chain is on the lumenal side. Positions 80–105 (AEGSDGNPQWAASAEDGPPLGGERNN) are disordered. Asn-105, Asn-131, and Asn-217 each carry an N-linked (GlcNAc...) asparagine glycan. The segment at 121-396 (LHVAIVCAGH…FLEYDGNLLR (276 aa)) is xylosyltransferase activity. Residues Asp-225 and Asp-227 each coordinate Mn(2+). An N-linked (GlcNAc...) asparagine glycan is attached at Asn-255. The glucuronyltransferase activity stretch occupies residues 397–739 (RELFGCASLP…LKYLTAERNL (343 aa)). Positions 546 and 548 each coordinate Mn(2+).

It in the C-terminal section; belongs to the glycosyltransferase 49 family. In the N-terminal section; belongs to the glycosyltransferase 8 family. It depends on Mn(2+) as a cofactor.

The protein localises to the golgi apparatus membrane. The enzyme catalyses 3-O-[beta-D-GlcA-(1-&gt;3)-beta-D-Xyl-(1-&gt;4)-Rib-ol-P-Rib-ol-P-3-beta-D-GalNAc-(1-&gt;3)-beta-D-GlcNAc-(1-&gt;4)-(O-6-P-alpha-D-Man)]-Thr-[protein] + UDP-alpha-D-xylose = 3-O-[alpha-D-Xyl-(1-&gt;3)-beta-D-GlcA-(1-&gt;4)-beta-D-Xyl-(1-&gt;4)-Rib-ol-P-Rib-ol-P-3-beta-D-GalNAc-(1-&gt;3)-beta-D-GlcNAc-(1-&gt;4)-(O-6-P-alpha-D-Man)]-Thr-[protein] + UDP + H(+). It catalyses the reaction 3-O-{(1-&gt;[3)-alpha-D-Xyl-(1-&gt;3)-beta-D-GlcA-(1-&gt;](n)-4)-beta-D-Xyl-(1-&gt;4)-Rib-ol-P-Rib-ol-P-3-beta-D-GalNAc-(1-&gt;3)-beta-D-GlcNAc-(1-&gt;4)-O-6-P-alpha-D-Man}-L-Thr-[protein] + UDP-alpha-D-glucuronate = 3-O-{beta-D-GlcA-(1-&gt;[3)-alpha-D-Xyl-(1-&gt;3)-beta-D-GlcA-(1-&gt;](n)-4)-beta-D-Xyl-(1-&gt;4)-Rib-ol-P-Rib-ol-P-3-beta-D-GalNAc-(1-&gt;3)-beta-D-GlcNAc-(1-&gt;4)-O-6-P-alpha-D-Man}-L-Thr-[protein] + UDP + H(+). The catalysed reaction is 3-O-{beta-D-GlcA-(1-&gt;[3)-alpha-D-Xyl-(1-&gt;3)-beta-D-GlcA-(1-&gt;](n)-4)-beta-D-Xyl-(1-&gt;4)-Rib-ol-P-Rib-ol-P-3-beta-D-GalNAc-(1-&gt;3)-beta-D-GlcNAc-(1-&gt;4)-O-6-P-alpha-D-Man}-L-Thr-[protein] + UDP-alpha-D-xylose = 3-O-{(1-&gt;[3)-alpha-D-Xyl-(1-&gt;3)-beta-D-GlcA-(1-&gt;](n+1)-4)-beta-D-Xyl-(1-&gt;4)-Rib-ol-P-Rib-ol-P-3-beta-D-GalNAc-(1-&gt;3)-beta-D-GlcNAc-(1-&gt;4)-O-6-P-alpha-D-Man}-L-Thr-[protein] + UDP + H(+). It functions in the pathway protein modification; protein glycosylation. Bifunctional glycosyltransferase with both alpha-1,3-xylosyltransferase and beta-1,3-glucuronyltransferase activities involved in the maturation of alpha-dystroglycan (DAG1) by glycosylation leading to DAG1 binding to laminin G-like domain-containing extracellular proteins with high affinity and in a phosphorylated-O-mannosyl trisaccharide dependent manner. Elongates the glucuronyl-beta-1,4-xylose-beta disaccharide primer structure by adding repeating units [-3-Xylose-alpha-1,3-GlcA-beta-1-] to produce a heteropolysaccharide. Supports the maturation of DAG1 more effectively than LARGE1. In addition, can modify both heparan sulfate (HS)- and chondroitin/dermatan sulfate (CS/DS)-proteoglycans (PGs), namely GPC4, with a glycosaminoglycan (GAG)-like polysaccharide composed of xylose and glucuronic acid to confer laminin binding. This is Xylosyl- and glucuronyltransferase LARGE2s from Gallus gallus (Chicken).